Reading from the N-terminus, the 221-residue chain is Protein N-terminal glutamine amidohydrolase (221 aa).

Position 2 is an N-acetylserine (serine 2). Active-site residues include cysteine 23, histidine 79, and aspartate 97.

It belongs to the NTAQ1 family. In terms of assembly, monomer.

The catalysed reaction is N-terminal L-glutaminyl-[protein] + H2O = N-terminal L-glutamyl-[protein] + NH4(+). In terms of biological role, mediates the side-chain deamidation of N-terminal glutamine residues to glutamate, an important step in N-end rule pathway of protein degradation. Conversion of the resulting N-terminal glutamine to glutamate renders the protein susceptible to arginylation, polyubiquitination and degradation as specified by the N-end rule. Does not act on substrates with internal or C-terminal glutamine and does not act on non-glutamine residues in any position. Involved in immune response. Controls the expression of specific defense-response genes, activates the synthesis pathway for the phytoalexin camalexin, and influences basal resistance to the hemibiotroph pathogen Pseudomonas syringae pv tomato (Pst). This is Protein N-terminal glutamine amidohydrolase from Arabidopsis thaliana (Mouse-ear cress).